We begin with the raw amino-acid sequence, 79 residues long: Putative membrane protein insertion efficiency factor (79 aa).

The protein belongs to the UPF0161 family.

Its subcellular location is the cell inner membrane. In terms of biological role, could be involved in insertion of integral membrane proteins into the membrane. This is Putative membrane protein insertion efficiency factor from Cytophaga hutchinsonii (strain ATCC 33406 / DSM 1761 / CIP 103989 / NBRC 15051 / NCIMB 9469 / D465).